A 168-amino-acid polypeptide reads, in one-letter code: Ribosome maturation factor RimP (168 aa).

It belongs to the RimP family.

It is found in the cytoplasm. Functionally, required for maturation of 30S ribosomal subunits. The protein is Ribosome maturation factor RimP of Bordetella bronchiseptica (strain ATCC BAA-588 / NCTC 13252 / RB50) (Alcaligenes bronchisepticus).